Reading from the N-terminus, the 148-residue chain is 3-dehydroquinate dehydratase (148 aa).

The active-site Proton acceptor is Y24. Substrate contacts are provided by N75, H81, and D88. The active-site Proton donor is the H101. Residues L102 to S103 and R112 each bind substrate.

Belongs to the type-II 3-dehydroquinase family. As to quaternary structure, homododecamer.

The catalysed reaction is 3-dehydroquinate = 3-dehydroshikimate + H2O. It participates in metabolic intermediate biosynthesis; chorismate biosynthesis; chorismate from D-erythrose 4-phosphate and phosphoenolpyruvate: step 3/7. Catalyzes a trans-dehydration via an enolate intermediate. In Sinorhizobium medicae (strain WSM419) (Ensifer medicae), this protein is 3-dehydroquinate dehydratase.